A 278-amino-acid polypeptide reads, in one-letter code: Elongation factor Ts (278 aa).

The interval 82–85 (TDFV) is involved in Mg(2+) ion dislocation from EF-Tu.

It belongs to the EF-Ts family.

Its subcellular location is the cytoplasm. Functionally, associates with the EF-Tu.GDP complex and induces the exchange of GDP to GTP. It remains bound to the aminoacyl-tRNA.EF-Tu.GTP complex up to the GTP hydrolysis stage on the ribosome. This Streptomyces coelicolor (strain ATCC BAA-471 / A3(2) / M145) protein is Elongation factor Ts (tsf).